Here is a 547-residue protein sequence, read N- to C-terminus: Chaperonin GroEL (547 aa).

ATP contacts are provided by residues 30 to 33, lysine 51, 87 to 91, glycine 415, and aspartate 496; these read TLGP and DGTTT.

Belongs to the chaperonin (HSP60) family. As to quaternary structure, forms a cylinder of 14 subunits composed of two heptameric rings stacked back-to-back. Interacts with the co-chaperonin GroES.

The protein localises to the cytoplasm. The catalysed reaction is ATP + H2O + a folded polypeptide = ADP + phosphate + an unfolded polypeptide.. Functionally, together with its co-chaperonin GroES, plays an essential role in assisting protein folding. The GroEL-GroES system forms a nano-cage that allows encapsulation of the non-native substrate proteins and provides a physical environment optimized to promote and accelerate protein folding. This is Chaperonin GroEL from Actinobacillus pleuropneumoniae (Haemophilus pleuropneumoniae).